A 510-amino-acid polypeptide reads, in one-letter code: Probable cytosol aminopeptidase (510 aa).

Residues K272 and D277 each contribute to the Mn(2+) site. K284 is a catalytic residue. Positions 296, 355, and 357 each coordinate Mn(2+). R359 is an active-site residue.

The protein belongs to the peptidase M17 family. The cofactor is Mn(2+).

It is found in the cytoplasm. The enzyme catalyses Release of an N-terminal amino acid, Xaa-|-Yaa-, in which Xaa is preferably Leu, but may be other amino acids including Pro although not Arg or Lys, and Yaa may be Pro. Amino acid amides and methyl esters are also readily hydrolyzed, but rates on arylamides are exceedingly low.. The catalysed reaction is Release of an N-terminal amino acid, preferentially leucine, but not glutamic or aspartic acids.. In terms of biological role, presumably involved in the processing and regular turnover of intracellular proteins. Catalyzes the removal of unsubstituted N-terminal amino acids from various peptides. The polypeptide is Probable cytosol aminopeptidase (Synechococcus sp. (strain JA-2-3B'a(2-13)) (Cyanobacteria bacterium Yellowstone B-Prime)).